A 193-amino-acid chain; its full sequence is uncharacterized protein (193 aa).

A run of 4 helical transmembrane segments spans residues 8-28 (GVLV…VVAI), 46-66 (FFIA…VASA), 82-102 (GLSI…ALVV), and 141-161 (IALT…LLAA).

The protein to M.leprae ML1222.

It is found in the cell membrane. This is an uncharacterized protein from Mycobacterium tuberculosis (strain CDC 1551 / Oshkosh).